The chain runs to 112 residues: Large ribosomal subunit protein eL30 (112 aa).

The protein belongs to the eukaryotic ribosomal protein eL30 family.

This is Large ribosomal subunit protein eL30 (RPL30) from Euphorbia esula (Leafy spurge).